We begin with the raw amino-acid sequence, 93 residues long: Small ribosomal subunit protein uS19 (93 aa).

The protein belongs to the universal ribosomal protein uS19 family.

Functionally, protein S19 forms a complex with S13 that binds strongly to the 16S ribosomal RNA. In Cutibacterium acnes (strain DSM 16379 / KPA171202) (Propionibacterium acnes), this protein is Small ribosomal subunit protein uS19.